A 246-amino-acid chain; its full sequence is UDP-N-acetyl-D-mannosaminuronic acid transferase (246 aa).

This sequence belongs to the glycosyltransferase 26 family.

It catalyses the reaction UDP-N-acetyl-alpha-D-mannosaminouronate + N-acetyl-alpha-D-glucosaminyl-di-trans,octa-cis-undecaprenyl diphosphate = beta-D-ManNAcA-(1-&gt;4)-alpha-D-GlcNAc-di-trans,octa-cis-undecaprenyl diphosphate + UDP + H(+). Its pathway is bacterial outer membrane biogenesis; enterobacterial common antigen biosynthesis. Functionally, catalyzes the synthesis of Und-PP-GlcNAc-ManNAcA (Lipid II), the second lipid-linked intermediate involved in enterobacterial common antigen (ECA) synthesis. This is UDP-N-acetyl-D-mannosaminuronic acid transferase from Escherichia coli O6:K15:H31 (strain 536 / UPEC).